The primary structure comprises 85 residues: Cell division topological specificity factor (85 aa).

The protein belongs to the MinE family.

Its function is as follows. Prevents the cell division inhibition by proteins MinC and MinD at internal division sites while permitting inhibition at polar sites. This ensures cell division at the proper site by restricting the formation of a division septum at the midpoint of the long axis of the cell. The protein is Cell division topological specificity factor of Xanthomonas euvesicatoria pv. vesicatoria (strain 85-10) (Xanthomonas campestris pv. vesicatoria).